The chain runs to 252 residues: Geranylgeranylglyceryl phosphate synthase (252 aa).

Residues Asp-26 and Ser-55 each contribute to the Mg(2+) site. Residues 174-180 (YLEAGSG), 205-206 (GG), and 227-228 (GT) contribute to the sn-glycerol 1-phosphate site.

This sequence belongs to the GGGP/HepGP synthase family. Group II subfamily. Requires Mg(2+) as cofactor.

The protein localises to the cytoplasm. The enzyme catalyses sn-glycerol 1-phosphate + (2E,6E,10E)-geranylgeranyl diphosphate = sn-3-O-(geranylgeranyl)glycerol 1-phosphate + diphosphate. It participates in membrane lipid metabolism; glycerophospholipid metabolism. Functionally, prenyltransferase that catalyzes the transfer of the geranylgeranyl moiety of geranylgeranyl diphosphate (GGPP) to the C3 hydroxyl of sn-glycerol-1-phosphate (G1P). This reaction is the first ether-bond-formation step in the biosynthesis of archaeal membrane lipids. This is Geranylgeranylglyceryl phosphate synthase from Thermococcus gammatolerans (strain DSM 15229 / JCM 11827 / EJ3).